A 126-amino-acid chain; its full sequence is Larval cuticle protein 2 (126 aa).

The N-terminal stretch at Met1–Ala16 is a signal peptide. The 62-residue stretch at Ala39 to Pro100 folds into the Chitin-binding type R&amp;R domain.

Functionally, component of the larval cuticle. This is Larval cuticle protein 2 (Lcp2) from Drosophila melanogaster (Fruit fly).